An 843-amino-acid chain; its full sequence is Receptor-like serine/threonine-protein kinase SD1-7 (843 aa).

The N-terminal stretch at 1–31 (MRSVPNYHHSFFIFLILILFLAFSVSPNTLS) is a signal peptide. In terms of domain architecture, Bulb-type lectin spans 32-151 (ATESLTISSN…NNRLLWQSFD (120 aa)). Residues 32-435 (ATESLTISSN…LEDKRIKNEK (404 aa)) are Extracellular-facing. 5 N-linked (GlcNAc...) asparagine glycosylation sites follow: Asn-41, Asn-92, Asn-116, Asn-236, and Asn-251. Residues 286 to 322 (PKDLCDNYKVCGNFGYCDSNSLPNCYCIKGFKPVNEQ) form the EGF-like; atypical domain. 4 cysteine pairs are disulfide-bonded: Cys-290/Cys-302, Cys-296/Cys-310, Cys-372/Cys-397, and Cys-376/Cys-382. One can recognise a PAN domain in the interval 341–422 (CDGRDGFTRL…GGQDLYVRLA (82 aa)). The N-linked (GlcNAc...) asparagine glycan is linked to Asn-381. A helical transmembrane segment spans residues 436 to 456 (IIGSSIGVSILLLLSFVIFHF). Residues 457–843 (WKRKQKRSIT…QITLSVIDAR (387 aa)) are Cytoplasmic-facing. The Protein kinase domain occupies 519-809 (FSNDNKLGQG…AIPQPKRPGF (291 aa)). ATP contacts are provided by residues 525-533 (LGQGGFGIV) and Lys-547. The residue at position 553 (Ser-553) is a Phosphoserine. The interval 608-625 (TRSSNLNWQKRFDIINGI) is caM-binding. The active-site Proton acceptor is the Asp-644. Phosphoserine occurs at positions 648 and 661. Thr-678 carries the post-translational modification Phosphothreonine. Ser-820 carries the phosphoserine modification.

This sequence belongs to the protein kinase superfamily. Ser/Thr protein kinase family. Interacts with PUB9, PUB13, PUB14 and PUB38. Autophosphorylated on serine and threonine residues. As to expression, mostly expressed in leaves, and, to a lower extent, in stems and flower buds.

Its subcellular location is the cell membrane. It carries out the reaction L-seryl-[protein] + ATP = O-phospho-L-seryl-[protein] + ADP + H(+). The enzyme catalyses L-threonyl-[protein] + ATP = O-phospho-L-threonyl-[protein] + ADP + H(+). In terms of biological role, involved in the regulation of cellular expansion and differentiation. Mediates subcellular relocalization of PUB9 from nucleus to plasma membrane in a protein-phosphorylation-dependent manner. May be involved in the abscisic acid-mediated signaling pathway, at least during germination. The chain is Receptor-like serine/threonine-protein kinase SD1-7 (SD17) from Arabidopsis thaliana (Mouse-ear cress).